Reading from the N-terminus, the 186-residue chain is MAGGGTEAFPDLGEHCQDPDCKLLDFLPFTCDGCKLVFCLEHRSYKSHNCPKSDHGSRTVSICETCSIAIETTGFDEKGIKSLLEKHERSGDCDPNKKKKPTCPVKRCKEILTFANNLTCKYCGVKFCLKHRFPTDHVCNKKIINTAGTSSRWNERFMEALSLRNQKGCGRGSSVSSKSSPSVRSF.

AN1-type zinc fingers lie at residues 10–58 (PDLG…HGSR) and 97–147 (KKKK…INTA). Residues Cys-16, Cys-21, Cys-31, Cys-34, Cys-39, His-42, His-48, Cys-50, Cys-103, Cys-108, Cys-120, Cys-123, Cys-128, His-131, His-137, and Cys-139 each contribute to the Zn(2+) site. Residues 167-186 (KGCGRGSSVSSKSSPSVRSF) form a disordered region. Residues 172 to 186 (GSSVSSKSSPSVRSF) show a composition bias toward low complexity.

Functionally, may be involved in environmental stress response. The sequence is that of Zinc finger AN1 domain-containing stress-associated protein 12 (SAP12) from Arabidopsis thaliana (Mouse-ear cress).